The sequence spans 102 residues: Small ribosomal subunit protein uS10 (102 aa).

Residues 34 to 58 (LSGPVPLPTKTLEIPARKSPDGEGT) are disordered.

It belongs to the universal ribosomal protein uS10 family. In terms of assembly, part of the 30S ribosomal subunit.

Functionally, involved in the binding of tRNA to the ribosomes. In Natronomonas pharaonis (strain ATCC 35678 / DSM 2160 / CIP 103997 / JCM 8858 / NBRC 14720 / NCIMB 2260 / Gabara) (Halobacterium pharaonis), this protein is Small ribosomal subunit protein uS10.